Here is a 315-residue protein sequence, read N- to C-terminus: Ninja-family protein 1 (315 aa).

3 disordered regions span residues 1-28 (MASR…AGEA), 68-142 (SLPG…AQEP), and 156-237 (DQGN…TGDL). Residues 99-108 (ERWRRREMQS) show a composition bias toward basic and acidic residues. Residues 156 to 166 (DQGNPSSSMPE) show a composition bias toward polar residues. Low complexity-rich tracts occupy residues 184–197 (SSDN…QNKS) and 221–234 (LRTL…TTST).

It belongs to the Ninja family.

It is found in the nucleus. This Triticum aestivum (Wheat) protein is Ninja-family protein 1 (AFP-A1).